Reading from the N-terminus, the 117-residue chain is Large ribosomal subunit protein bL20 (117 aa).

The protein belongs to the bacterial ribosomal protein bL20 family.

Functionally, binds directly to 23S ribosomal RNA and is necessary for the in vitro assembly process of the 50S ribosomal subunit. It is not involved in the protein synthesizing functions of that subunit. This Maridesulfovibrio salexigens (strain ATCC 14822 / DSM 2638 / NCIMB 8403 / VKM B-1763) (Desulfovibrio salexigens) protein is Large ribosomal subunit protein bL20.